A 548-amino-acid chain; its full sequence is Polynucleotide 5'-hydroxyl-kinase nol-9 (548 aa).

Position 186 to 193 (186 to 193 (GHKGAGKS)) interacts with ATP.

Belongs to the Clp1 family. NOL9/GRC3 subfamily.

It localises to the nucleus. The protein localises to the nucleolus. Polynucleotide 5'-kinase involved in rRNA processing. The chain is Polynucleotide 5'-hydroxyl-kinase nol-9 (nol-9) from Caenorhabditis briggsae.